Here is a 235-residue protein sequence, read N- to C-terminus: Sugar fermentation stimulation protein homolog (235 aa).

This sequence belongs to the SfsA family.

The sequence is that of Sugar fermentation stimulation protein homolog from Alkaliphilus oremlandii (strain OhILAs) (Clostridium oremlandii (strain OhILAs)).